A 453-amino-acid chain; its full sequence is Folate transporter 1 (453 aa).

Residue Asn36 is glycosylated (N-linked (GlcNAc...) asparagine). A run of 5 helical transmembrane segments spans residues Pro48–Leu68, Ile73–Gly93, Val102–Val122, Ala136–His156, and Leu161–Leu181. N-linked (GlcNAc...) asparagine glycosylation occurs at Asn260. A run of 5 helical transmembrane segments spans residues Val276 to Ile296, His306 to Ser326, Val331 to Ala351, Ile368 to Val388, and Phe401 to Ile421.

Belongs to the reduced folate carrier (RFC) transporter (TC 2.A.48) family. As to expression, highly expressed in pharynx and posterior part of the intestine. Expressed at lower levels in the body wall muscles, head muscles, and vulva muscles. Highly expressed in the intestine of the early larva, levels decrease in the later stages of development.

Its subcellular location is the membrane. Folate transporter. The protein is Folate transporter 1 (folt-1) of Caenorhabditis elegans.